The sequence spans 330 residues: Phosphate acyltransferase (330 aa).

This sequence belongs to the PlsX family. In terms of assembly, homodimer. Probably interacts with PlsY.

The protein localises to the cytoplasm. The enzyme catalyses a fatty acyl-[ACP] + phosphate = an acyl phosphate + holo-[ACP]. It functions in the pathway lipid metabolism; phospholipid metabolism. Functionally, catalyzes the reversible formation of acyl-phosphate (acyl-PO(4)) from acyl-[acyl-carrier-protein] (acyl-ACP). This enzyme utilizes acyl-ACP as fatty acyl donor, but not acyl-CoA. The protein is Phosphate acyltransferase of Carboxydothermus hydrogenoformans (strain ATCC BAA-161 / DSM 6008 / Z-2901).